Reading from the N-terminus, the 60-residue chain is Putative transcriptional regulator XtpA (60 aa).

Functionally, controls the expression of small non-coding RNA GcvB, which represses the expression of many amino acid transporter proteins and uptake of aminoglycoside antibiotics in cells. Might be a transcriptional activator. An RNA (xtr) with a tRNA-like fold possibly derived from tRNA-Arg(UCG) is encoded entirely within the protein; xtr does not have the sequence corresponding to tRNA anticodon or variable arms. 10 synonymous codon changes in the xtr region of xtpA have the same phenotype as a deletion mutation, suggesting the mRNA secondary structure is important for function. The polypeptide is Putative transcriptional regulator XtpA (Escherichia coli (strain K12)).